The chain runs to 370 residues: Translocating chain-associated membrane protein 2 (370 aa).

Residues Met-1 to His-22 are Cytoplasmic-facing. Residues Ala-23 to Ala-43 traverse the membrane as a helical segment. The Extracellular portion of the chain corresponds to Lys-44–Leu-75. Asn-55 is a glycosylation site (N-linked (GlcNAc...) asparagine). Residues Val-76–Ile-96 form a helical membrane-spanning segment. The Cytoplasmic segment spans residues Leu-97–Gln-119. Positions Ser-112 to Tyr-321 constitute a TLC domain. A helical transmembrane segment spans residues Leu-120 to Tyr-140. Topologically, residues Leu-141–Gln-159 are extracellular. A helical transmembrane segment spans residues Val-160–Phe-180. Residues Gln-181 to Gln-191 are Cytoplasmic-facing. The chain crosses the membrane as a helical span at residues Leu-192 to Asn-209. At Leu-210–Gly-214 the chain is on the extracellular side. The helical transmembrane segment at Leu-215–Tyr-235 threads the bilayer. Over Phe-236–Ala-250 the chain is Cytoplasmic. The chain crosses the membrane as a helical span at residues Val-251–Leu-271. The Extracellular segment spans residues Ala-272–Asn-287. A helical transmembrane segment spans residues Thr-288 to Trp-308. Residues Arg-309–Pro-370 are Cytoplasmic-facing. The interval Tyr-348–Pro-370 is disordered.

It belongs to the TRAM family. Interacts with SERCA2B and COL1A1.

It localises to the membrane. Its function is as follows. Necessary for collagen type I synthesis. May couple the activity of the ER Ca(2+) pump SERCA2B with the activity of the translocon. This coupling may increase the local Ca(2+) concentration at the site of collagen synthesis, and a high Ca(2+) concentration may be necessary for the function of molecular chaperones involved in collagen folding. Required for proper insertion of the first transmembrane helix N-terminus of TM4SF20 into the ER lumen, may act as a ceramide sensor for regulated alternative translocation (RAT). This is Translocating chain-associated membrane protein 2 (TRAM2) from Homo sapiens (Human).